A 190-amino-acid polypeptide reads, in one-letter code: MKLIIGLGNPGTEYDGTRHNIGFAVADALAAHHNASFSKEKGRYLSAKIKLGSESVGIIKPMTYMNHSGHAVVAAMNFYKVARTEIVVICDDLNLPVGTMRLRPKGSAGGQNGLKHIIECFGSNEFARLRIGIGSQNMPKGGFSSFVLGKFSEQEKSEIAIMTVSARDCAIDFALHGLGHAMNHFNTSKL.

Tyr14 is a tRNA binding site. Residue His19 is the Proton acceptor of the active site. Residues Tyr64, Asn66, and Asn112 each contribute to the tRNA site.

The protein belongs to the PTH family. In terms of assembly, monomer.

Its subcellular location is the cytoplasm. It catalyses the reaction an N-acyl-L-alpha-aminoacyl-tRNA + H2O = an N-acyl-L-amino acid + a tRNA + H(+). Its function is as follows. Hydrolyzes ribosome-free peptidyl-tRNAs (with 1 or more amino acids incorporated), which drop off the ribosome during protein synthesis, or as a result of ribosome stalling. In terms of biological role, catalyzes the release of premature peptidyl moieties from peptidyl-tRNA molecules trapped in stalled 50S ribosomal subunits, and thus maintains levels of free tRNAs and 50S ribosomes. The sequence is that of Peptidyl-tRNA hydrolase from Chlorobium chlorochromatii (strain CaD3).